Consider the following 890-residue polypeptide: Translation initiation factor IF-2 (890 aa).

The tract at residues L45–Q304 is disordered. Residues S67–V81 show a composition bias toward polar residues. Over residues V92–D217 the composition is skewed to basic and acidic residues. Residues G252–N266 show a composition bias toward basic residues. The segment covering K267–A280 has biased composition (basic and acidic residues). The tr-type G domain maps to P389–K558. Positions G398–T405 are G1. A GTP-binding site is contributed by G398 to T405. The G2 stretch occupies residues G423 to H427. Positions D444–G447 are G3. Residues D444–H448 and N498–D501 each bind GTP. The segment at N498–D501 is G4. Residues S534–K536 are G5. K808 is modified (N6-acetyllysine).

Belongs to the TRAFAC class translation factor GTPase superfamily. Classic translation factor GTPase family. IF-2 subfamily.

The protein localises to the cytoplasm. One of the essential components for the initiation of protein synthesis. Protects formylmethionyl-tRNA from spontaneous hydrolysis and promotes its binding to the 30S ribosomal subunits. Also involved in the hydrolysis of GTP during the formation of the 70S ribosomal complex. The polypeptide is Translation initiation factor IF-2 (Escherichia coli O127:H6 (strain E2348/69 / EPEC)).